A 642-amino-acid polypeptide reads, in one-letter code: Zinc finger protein 14 (642 aa).

Residues Val-4–Lys-76 form the KRAB domain. The C2H2-type 1 zinc finger occupies His-103–His-125. Residues Arg-141–His-163 form a C2H2-type 2; degenerate zinc finger. A C2H2-type 3 zinc finger spans residues Tyr-169–His-191. A C2H2-type 4; atypical zinc finger spans residues Tyr-197 to His-217. 15 C2H2-type zinc fingers span residues Tyr-223 to His-245, Tyr-251 to His-273, Tyr-279 to His-301, Tyr-307 to His-329, Tyr-335 to His-357, Tyr-363 to His-385, Tyr-391 to His-413, Tyr-419 to His-441, Tyr-447 to His-469, Tyr-475 to His-497, Tyr-503 to His-525, Phe-531 to His-553, Tyr-559 to His-581, Tyr-587 to His-609, and Tyr-615 to His-637.

Belongs to the krueppel C2H2-type zinc-finger protein family.

The protein resides in the nucleus. In terms of biological role, may be involved in transcriptional regulation. This is Zinc finger protein 14 (ZNF14) from Pongo abelii (Sumatran orangutan).